A 348-amino-acid polypeptide reads, in one-letter code: Phenylalanine--tRNA ligase alpha subunit (348 aa).

Glu-259 serves as a coordination point for Mg(2+).

It belongs to the class-II aminoacyl-tRNA synthetase family. Phe-tRNA synthetase alpha subunit type 1 subfamily. Tetramer of two alpha and two beta subunits. It depends on Mg(2+) as a cofactor.

The protein resides in the cytoplasm. It carries out the reaction tRNA(Phe) + L-phenylalanine + ATP = L-phenylalanyl-tRNA(Phe) + AMP + diphosphate + H(+). The chain is Phenylalanine--tRNA ligase alpha subunit from Levilactobacillus brevis (strain ATCC 367 / BCRC 12310 / CIP 105137 / JCM 1170 / LMG 11437 / NCIMB 947 / NCTC 947) (Lactobacillus brevis).